Consider the following 195-residue polypeptide: Glycerol-3-phosphate acyltransferase (195 aa).

5 helical membrane passes run 2-22 (LWIF…GLFI), 52-72 (YGVA…LMAY), 78-98 (WIFI…SIFM), 112-132 (VFLA…LAVI), and 145-165 (FAVA…VPLA).

The protein belongs to the PlsY family. In terms of assembly, probably interacts with PlsX.

It localises to the cell inner membrane. The enzyme catalyses an acyl phosphate + sn-glycerol 3-phosphate = a 1-acyl-sn-glycero-3-phosphate + phosphate. The protein operates within lipid metabolism; phospholipid metabolism. Its function is as follows. Catalyzes the transfer of an acyl group from acyl-phosphate (acyl-PO(4)) to glycerol-3-phosphate (G3P) to form lysophosphatidic acid (LPA). This enzyme utilizes acyl-phosphate as fatty acyl donor, but not acyl-CoA or acyl-ACP. This is Glycerol-3-phosphate acyltransferase from Maridesulfovibrio salexigens (strain ATCC 14822 / DSM 2638 / NCIMB 8403 / VKM B-1763) (Desulfovibrio salexigens).